Consider the following 296-residue polypeptide: Acetylglutamate kinase (296 aa).

Substrate-binding positions include 67 to 68 (GG), Arg89, and Asn194.

The protein belongs to the acetylglutamate kinase family. ArgB subfamily.

It localises to the cytoplasm. The enzyme catalyses N-acetyl-L-glutamate + ATP = N-acetyl-L-glutamyl 5-phosphate + ADP. It participates in amino-acid biosynthesis; L-arginine biosynthesis; N(2)-acetyl-L-ornithine from L-glutamate: step 2/4. In terms of biological role, catalyzes the ATP-dependent phosphorylation of N-acetyl-L-glutamate. The protein is Acetylglutamate kinase of Brucella anthropi (strain ATCC 49188 / DSM 6882 / CCUG 24695 / JCM 21032 / LMG 3331 / NBRC 15819 / NCTC 12168 / Alc 37) (Ochrobactrum anthropi).